The following is a 454-amino-acid chain: uncharacterized protein (454 aa).

Belongs to the outer membrane factor (OMF) (TC 1.B.17) family.

This is an uncharacterized protein from Haemophilus influenzae (strain ATCC 51907 / DSM 11121 / KW20 / Rd).